A 532-amino-acid polypeptide reads, in one-letter code: MKFQSFFSSVLIFFTTSTLLLSIPHPVSANRSNQSSFLQCLSLQLNDSNIVSKVIHTPNDTSFSSVLASSIQNQRFSAPDVPKPVLILTPVQPSDVQSAVKCARRFGIHIRTRSGGHDYEGLSYVTHKPFVILDLRNLRSITVDVDNRSVWVQTGATIGELYYEIGKKNRTLAFPAGVCPTVGVGGHFSGGGYGTLLRKHGLAADHVIDARVVDARGRILERREMGEDFFWAIRGGGGSSFCVVLSWKIGLINVPSTVTVFNVTKFSEQSALKIIHRWQFVADKVSDDLFIRVMLQRYKNMVRASFPGLYLGSVKNLLKMVNKEFPELGLEEDDCTEMSWIESVIWFAELGEEPINVLTKRTRASLAFKAKSDFVQEPMPKTAISKLWRRLQEPEAEHAQLIFTPFGGKMSEIADYETPFPHRKGNIYEIQYLNYWRGDVKEKYMRWVERVYDDMSEFVAKSPRGAYINLRDLDLGMYVGVKRSKYEEGKSWGVKYFKNNFERLVRVKTSVDPSDFFCDEQSIPPFTFVEVI.

Residues 1–29 form the signal peptide; it reads MKFQSFFSSVLIFFTTSTLLLSIPHPVSA. Residues Asn-30, Asn-33, Asn-46, Asn-59, Asn-147, Asn-169, and Asn-262 are each glycosylated (N-linked (GlcNAc...) asparagine). Cys-40 and Cys-102 are disulfide-bonded. The FAD-binding PCMH-type domain occupies 80–254; sequence DVPKPVLILT…LSWKIGLINV (175 aa). A cross-link (6-(S-cysteinyl)-8alpha-(pros-histidyl)-FAD (His-Cys)) is located at residues 117–179; the sequence is HDYEGLSYVT…RTLAFPAGVC (63 aa).

This sequence belongs to the oxygen-dependent FAD-linked oxidoreductase family. FAD serves as cofactor. In terms of processing, the FAD cofactor is bound via a bicovalent 6-S-cysteinyl, 8alpha-N1-histidyl FAD linkage.

The protein localises to the secreted. It localises to the cell wall. The sequence is that of Berberine bridge enzyme-like 18 from Arabidopsis thaliana (Mouse-ear cress).